Consider the following 290-residue polypeptide: uncharacterized protein (290 aa).

This is an uncharacterized protein from Ictalurid herpesvirus 1 (strain Auburn) (IcHV-1).